Here is a 117-residue protein sequence, read N- to C-terminus: Large ribosomal subunit protein bL20 (117 aa).

The protein belongs to the bacterial ribosomal protein bL20 family.

In terms of biological role, binds directly to 23S ribosomal RNA and is necessary for the in vitro assembly process of the 50S ribosomal subunit. It is not involved in the protein synthesizing functions of that subunit. This chain is Large ribosomal subunit protein bL20, found in Actinobacillus succinogenes (strain ATCC 55618 / DSM 22257 / CCUG 43843 / 130Z).